A 162-amino-acid polypeptide reads, in one-letter code: Regulator of ribonuclease activity A (162 aa).

Belongs to the RraA family. In terms of assembly, homotrimer. Binds to both RNA-binding sites in the C-terminal region of Rne and to RhlB.

The protein localises to the cytoplasm. Globally modulates RNA abundance by binding to RNase E (Rne) and regulating its endonucleolytic activity. Can modulate Rne action in a substrate-dependent manner by altering the composition of the degradosome. Modulates RNA-binding and helicase activities of the degradosome. This is Regulator of ribonuclease activity A from Haemophilus influenzae (strain ATCC 51907 / DSM 11121 / KW20 / Rd).